Consider the following 158-residue polypeptide: uncharacterized protein (158 aa).

This is an uncharacterized protein from Pasteurella multocida (strain Pm70).